Here is a 289-residue protein sequence, read N- to C-terminus: UPF0276 protein BB1291 (289 aa).

Belongs to the UPF0276 family.

The chain is UPF0276 protein BB1291 from Bordetella bronchiseptica (strain ATCC BAA-588 / NCTC 13252 / RB50) (Alcaligenes bronchisepticus).